A 171-amino-acid chain; its full sequence is Large ribosomal subunit protein uL24 (171 aa).

A large ribosomal subunit protein uL24 region spans residues 1-124; the sequence is MNIKTGDTVV…AKPAKTKAEK (124 aa). Residues 108–171 form a disordered region; it reads GQTLDKAAKP…SVQKKGASGK (64 aa). The tract at residues 125 to 171 is unknown; the sequence is VEKAATSSTDKPAKVTKAAKEAKPVKAVKSQKVEKNTSVQKKGASGK.

Belongs to the universal ribosomal protein uL24 family. As to quaternary structure, part of the 50S ribosomal subunit.

Functionally, one of two assembly initiator proteins, it binds directly to the 5'-end of the 23S rRNA, where it nucleates assembly of the 50S subunit. One of the proteins that surrounds the polypeptide exit tunnel on the outside of the subunit. This Acholeplasma laidlawii (strain PG-8A) protein is Large ribosomal subunit protein uL24.